Reading from the N-terminus, the 127-residue chain is DQDCLPGWSFYEGHCYKVFDVKKTWEDAEKFCTEQMSGGHLVSFHSSEEVDFMIKLASPILKFDLVWIGLSNFWRDCHWGWSDGVKLDYKAWSDKPNCYVAKTVDPQWLHRDCSRTYKFVCKSRVPR.

Cystine bridges form between Cys4-Cys15, Cys32-Cys121, and Cys98-Cys113. The 112-residue stretch at 11–122 (YEGHCYKVFD…CSRTYKFVCK (112 aa)) folds into the C-type lectin domain.

Heterodimer of subunits alpha and beta; disulfide-linked. Expressed by the venom gland.

The protein localises to the secreted. Interferes with one step of hemostasis (modulation of platelet aggregation, or coagulation cascade, for example). This is Snaclec macrovipecetin subunit beta from Macrovipera lebetinus (Levantine viper).